A 72-amino-acid chain; its full sequence is Exodeoxyribonuclease 7 small subunit (72 aa).

The protein belongs to the XseB family. As to quaternary structure, heterooligomer composed of large and small subunits.

The protein localises to the cytoplasm. It carries out the reaction Exonucleolytic cleavage in either 5'- to 3'- or 3'- to 5'-direction to yield nucleoside 5'-phosphates.. Functionally, bidirectionally degrades single-stranded DNA into large acid-insoluble oligonucleotides, which are then degraded further into small acid-soluble oligonucleotides. The sequence is that of Exodeoxyribonuclease 7 small subunit from Ruegeria pomeroyi (strain ATCC 700808 / DSM 15171 / DSS-3) (Silicibacter pomeroyi).